Here is a 302-residue protein sequence, read N- to C-terminus: MTKTPLTIEEPIFSHLPVLPQEVITGLVVRPGGRYLDVTVGGGGHSRLILEAAPDVKLTAVDQDGDALTAAKQELAEFGEQVKFVRSNFAAYDFPSTSFDGVLADLGVSSYHLDTPERGFSFRHQASLDMRMDQRQSLSAADVINDWDEVELANIFFKYGEERLSRRIARRIVEKRPFHTTTELAEAIASSVPPKYRYGRIHPATRVFQALRIVVNDELKSLETFIEKAPKALVPGGRIAIISFHSLEDRLVKHGLRNSPLLKVLTKKPIIATDDEIANNPRSRSAKLRIAEKQAETGDEDN.

Residues 43 to 45 (GGH), aspartate 62, phenylalanine 89, aspartate 105, and histidine 112 contribute to the S-adenosyl-L-methionine site. The interval 276–302 (EIANNPRSRSAKLRIAEKQAETGDEDN) is disordered.

It belongs to the methyltransferase superfamily. RsmH family.

The protein resides in the cytoplasm. The enzyme catalyses cytidine(1402) in 16S rRNA + S-adenosyl-L-methionine = N(4)-methylcytidine(1402) in 16S rRNA + S-adenosyl-L-homocysteine + H(+). Functionally, specifically methylates the N4 position of cytidine in position 1402 (C1402) of 16S rRNA. This chain is Ribosomal RNA small subunit methyltransferase H, found in Nostoc sp. (strain PCC 7120 / SAG 25.82 / UTEX 2576).